The sequence spans 428 residues: Beta-1,3-galactosyl-O-glycosyl-glycoprotein beta-1,6-N-acetylglucosaminyltransferase 4 (428 aa).

Residues 1-12 (MRRCAVLHRLRC) lie on the Cytoplasmic side of the membrane. The helical; Signal-anchor for type II membrane protein transmembrane segment at 13–30 (KFYVFVVSLFVVVKLVYL) threads the bilayer. At 31-428 (KISMDNSIYI…QLQQCLRRVS (398 aa)) the chain is on the lumenal side. N-linked (GlcNAc...) asparagine glycosylation occurs at Asn59. 4 disulfides stabilise this stretch: Cys60/Cys214, Cys148/Cys369, Cys169/Cys196, and Cys378/Cys410.

Belongs to the glycosyltransferase 14 family.

The protein localises to the golgi apparatus membrane. It catalyses the reaction a 3-O-[beta-D-galactosyl-(1-&gt;3)-N-acetyl-alpha-D-galactosaminyl]-L-seryl-[protein] + UDP-N-acetyl-alpha-D-glucosamine = 3-O-{beta-D-galactosyl-(1-&gt;3)-[N-acetyl-beta-D-glucosaminyl-(1-&gt;6)]-N-acetyl-alpha-D-galactosaminyl}-L-seryl-[protein] + UDP + H(+). The catalysed reaction is a 3-O-[beta-D-galactosyl-(1-&gt;3)-N-acetyl-alpha-D-galactosaminyl]-L-threonyl-[protein] + UDP-N-acetyl-alpha-D-glucosamine = a 3-O-{beta-D-galactosyl-(1-&gt;3)-[N-acetyl-beta-D-glucosaminyl-(1-&gt;6)]-N-acetyl-alpha-D-galactosaminyl}-L-threonyl-[protein] + UDP + H(+). The protein operates within protein modification; protein glycosylation. In terms of biological role, glycosyltransferase that mediates core 2 O-glycan branching, an important step in mucin-type biosynthesis. This is Beta-1,3-galactosyl-O-glycosyl-glycoprotein beta-1,6-N-acetylglucosaminyltransferase 4 (gcnt4) from Danio rerio (Zebrafish).